We begin with the raw amino-acid sequence, 111 residues long: Large ribosomal subunit protein uL22 (111 aa).

The protein belongs to the universal ribosomal protein uL22 family. In terms of assembly, part of the 50S ribosomal subunit.

Its function is as follows. This protein binds specifically to 23S rRNA; its binding is stimulated by other ribosomal proteins, e.g. L4, L17, and L20. It is important during the early stages of 50S assembly. It makes multiple contacts with different domains of the 23S rRNA in the assembled 50S subunit and ribosome. Functionally, the globular domain of the protein is located near the polypeptide exit tunnel on the outside of the subunit, while an extended beta-hairpin is found that lines the wall of the exit tunnel in the center of the 70S ribosome. The polypeptide is Large ribosomal subunit protein uL22 (Acholeplasma laidlawii).